Reading from the N-terminus, the 271-residue chain is Co-chaperone protein DjlA (271 aa).

Over 1-6 (MQYWGK) the chain is Periplasmic. Residues 7-31 (IIGVAVALLMGGGFWGVVLGLLIGH) traverse the membrane as a helical segment. At 32–271 (MFDKARSRKM…ELIKQQKGFK (240 aa)) the chain is on the cytoplasmic side. Residues 205–271 (DACNVLGVKP…ELIKQQKGFK (67 aa)) form the J domain.

Homodimer.

It is found in the cell inner membrane. Regulatory DnaK co-chaperone. Direct interaction between DnaK and DjlA is needed for the induction of the wcaABCDE operon, involved in the synthesis of a colanic acid polysaccharide capsule, possibly through activation of the RcsB/RcsC phosphotransfer signaling pathway. The colanic acid capsule may help the bacterium survive conditions outside the host. The protein is Co-chaperone protein DjlA of Escherichia coli O157:H7.